A 156-amino-acid chain; its full sequence is Small ribosomal subunit protein uS7c (156 aa).

Belongs to the universal ribosomal protein uS7 family. As to quaternary structure, part of the 30S ribosomal subunit.

The protein resides in the plastid. It is found in the chloroplast. In terms of biological role, one of the primary rRNA binding proteins, it binds directly to 16S rRNA where it nucleates assembly of the head domain of the 30S subunit. This Chlorokybus atmophyticus (Soil alga) protein is Small ribosomal subunit protein uS7c (rps7).